Reading from the N-terminus, the 168-residue chain is Xanthine-guanine phosphoribosyltransferase (168 aa).

Residues 43–44 (RG) and 102–110 (DDLVDTGAT) each bind 5-phospho-alpha-D-ribose 1-diphosphate. A Mg(2+)-binding site is contributed by D103. 2 residues coordinate guanine: D106 and I149. Residues D106 and I149 each coordinate xanthine. Residues 106–110 (DTGAT) and 148–149 (WI) contribute to the GMP site.

This sequence belongs to the purine/pyrimidine phosphoribosyltransferase family. XGPT subfamily. As to quaternary structure, homotetramer. Requires Mg(2+) as cofactor.

The protein localises to the cell inner membrane. It carries out the reaction GMP + diphosphate = guanine + 5-phospho-alpha-D-ribose 1-diphosphate. The catalysed reaction is XMP + diphosphate = xanthine + 5-phospho-alpha-D-ribose 1-diphosphate. It catalyses the reaction IMP + diphosphate = hypoxanthine + 5-phospho-alpha-D-ribose 1-diphosphate. The protein operates within purine metabolism; GMP biosynthesis via salvage pathway; GMP from guanine: step 1/1. It participates in purine metabolism; XMP biosynthesis via salvage pathway; XMP from xanthine: step 1/1. Its function is as follows. Purine salvage pathway enzyme that catalyzes the transfer of the ribosyl-5-phosphate group from 5-phospho-alpha-D-ribose 1-diphosphate (PRPP) to the N9 position of the 6-oxopurines guanine and xanthine to form the corresponding ribonucleotides GMP (guanosine 5'-monophosphate) and XMP (xanthosine 5'-monophosphate), with the release of PPi. To a lesser extent, also acts on hypoxanthine. In Nitrobacter hamburgensis (strain DSM 10229 / NCIMB 13809 / X14), this protein is Xanthine-guanine phosphoribosyltransferase.